The following is a 290-amino-acid chain: MEADLEVQSELEKDTIPIKIGIIGEANLDKPIYLAERMEYAVCTPFGKPSDVIIDGQIEGVNVCLLSRNGRNHDIMPSNINYRANVWAMRKMGCTHILVTNTFSSLRDTFQPGHLVVPNDVIDYTSRRAQTFYDGAVGSPLGVCHVPMNPTFCERTRQHLLSAAEELGFPTGSSGTVLTLEGPRYSTVAENNMFRKWGADLLSMTLCPEAILAKEAGIPYASLGLVTNMECWCAKQPNATTHEIIYIFKKQSENLQKVLITAIRNMAAEDWAEDILKAKILVCSNFANSK.

Arg68–Asn69 serves as a coordination point for phosphate. Residue Met204 coordinates substrate. Position 205 (Thr205) interacts with phosphate.

Belongs to the PNP/MTAP phosphorylase family. MTAP subfamily. Homotrimer.

Its subcellular location is the cytoplasm. The protein resides in the nucleus. The catalysed reaction is a purine D-ribonucleoside + phosphate = a purine nucleobase + alpha-D-ribose 1-phosphate. Its pathway is purine metabolism; purine nucleoside salvage. In terms of biological role, purine nucleoside phosphorylase involved in purine salvage. The chain is Purine nucleoside phosphorylase from Drosophila melanogaster (Fruit fly).